Here is a 671-residue protein sequence, read N- to C-terminus: cGMP-dependent protein kinase 1 (671 aa).

Serine 2 is subject to N-acetylserine. Residues 2–59 (SELEEDFAKILMLKEERIKELEKRLSEKEEEIQELKRKLHKCQSVLPVPSTHIGPRTT) are a coiled coil. Residues 2 to 102 (SELEEDFAKI…LIKEAILDND (101 aa)) are required for dimerization. The leucine-zipper stretch occupies residues 9–44 (AKILMLKEERIKELEKRLSEKEEEIQELKRKLHKCQ). The autoinhibitory domain stretch occupies residues 50 to 75 (PSTHIGPRTTRAQGISAEPQTYRSFH). Threonine 59 bears the Phosphothreonine; by autocatalysis mark. Residues 103 to 220 (FMKNLELSQI…EYMEFLKSVP (118 aa)) are cGMP-binding, high affinity. 3',5'-cyclic AMP contacts are provided by residues 167–170 (GELA) and 177–178 (RT). Residues 167–170 (GELA), 177–178 (RT), arginine 282, 291–294 (GEKA), 301–302 (RT), and tyrosine 336 contribute to the 3',5'-cyclic GMP site. The tract at residues 221–341 (TFQSLPEEIL…SNKAYEDAEA (121 aa)) is cGMP-binding, low affinity. Residues 291 to 294 (GEKA), 301 to 302 (RT), and tyrosine 336 contribute to the 3',5'-cyclic AMP site. Positions 360–619 (FNIIDTLGVG…VKDIQKHKWF (260 aa)) constitute a Protein kinase domain. ATP contacts are provided by residues 366–374 (LGVGGFGRV) and lysine 390. Residue aspartate 484 is the Proton acceptor of the active site. Residue threonine 515 is modified to Phosphothreonine. The AGC-kinase C-terminal domain maps to 620–671 (EGFNWEGLRKGTLTPPIIPSVASPTDTSNFDSFPEDNDEPPPDDNSGWDIDF). Positions 635–671 (PIIPSVASPTDTSNFDSFPEDNDEPPPDDNSGWDIDF) are disordered. Positions 652-661 (FPEDNDEPPP) are enriched in acidic residues.

Belongs to the protein kinase superfamily. AGC Ser/Thr protein kinase family. cGMP subfamily. Isoform alpha: parallel homodimer or heterodimer and also heterotetramer. Interacts directly with PPP1R12A. Non-covalent dimer of dimer of PRKG1-PRKG1 and PPP1R12A-PPP1R12A. This interaction targets PRKG1 to stress fibers to mediate smooth muscle cell relaxation and vasodilation in responses to rises in cGMP. Isoform beta: antiparallel homodimer. Part of cGMP kinase signaling complex at least composed of ACTA2/alpha-actin, CNN1/calponin H1, PLN/phospholamban, PRKG1 and ITPR1. Interacts with IRAG1. Forms a stable complex with ITPR1, IRAG1, and isoform beta of PRKG1. Interacts with TRPC7 (via ankyrin repeat domain). Isoform alpha interacts with RGS2. Interacts with GTF2I. In terms of processing, autophosphorylation increases kinase activity. Post-translationally, 65 kDa monomer is produced by proteolytic cleavage. As to expression, primarily expressed in lung and placenta.

Its subcellular location is the cytoplasm. The catalysed reaction is L-seryl-[protein] + ATP = O-phospho-L-seryl-[protein] + ADP + H(+). It carries out the reaction L-threonyl-[protein] + ATP = O-phospho-L-threonyl-[protein] + ADP + H(+). With respect to regulation, in the absence of cGMP, PRKG1 activity is suppressed by autoinhibitory contacts. In terms of biological role, serine/threonine protein kinase that acts as a key mediator of the nitric oxide (NO)/cGMP signaling pathway. GMP binding activates PRKG1, which phosphorylates serines and threonines on many cellular proteins. Numerous protein targets for PRKG1 phosphorylation are implicated in modulating cellular calcium, but the contribution of each of these targets may vary substantially among cell types. Proteins that are phosphorylated by PRKG1 regulate platelet activation and adhesion, smooth muscle contraction, cardiac function, gene expression, feedback of the NO-signaling pathway, and other processes involved in several aspects of the CNS like axon guidance, hippocampal and cerebellar learning, circadian rhythm and nociception. Smooth muscle relaxation is mediated through lowering of intracellular free calcium, by desensitization of contractile proteins to calcium, and by decrease in the contractile state of smooth muscle or in platelet activation. Regulates intracellular calcium levels via several pathways: phosphorylates IRAG1 and inhibits IP3-induced Ca(2+) release from intracellular stores, phosphorylation of KCNMA1 (BKCa) channels decreases intracellular Ca(2+) levels, which leads to increased opening of this channel. PRKG1 phosphorylates the canonical transient receptor potential channel (TRPC) family which inactivates the associated inward calcium current. Another mode of action of NO/cGMP/PKGI signaling involves PKGI-mediated inactivation of the Ras homolog gene family member A (RhoA). Phosphorylation of RHOA by PRKG1 blocks the action of this protein in myriad processes: regulation of RHOA translocation; decreasing contraction; controlling vesicle trafficking, reduction of myosin light chain phosphorylation resulting in vasorelaxation. Activation of PRKG1 by NO signaling also alters gene expression in a number of tissues. In smooth muscle cells, increased cGMP and PRKG1 activity influence expression of smooth muscle-specific contractile proteins, levels of proteins in the NO/cGMP signaling pathway, down-regulation of the matrix proteins osteopontin and thrombospondin-1 to limit smooth muscle cell migration and phenotype. Regulates vasodilator-stimulated phosphoprotein (VASP) functions in platelets and smooth muscle. In Homo sapiens (Human), this protein is cGMP-dependent protein kinase 1 (PRKG1).